Reading from the N-terminus, the 130-residue chain is Holo-[acyl-carrier-protein] synthase (130 aa).

Residues aspartate 9 and glutamate 58 each contribute to the Mg(2+) site.

The protein belongs to the P-Pant transferase superfamily. AcpS family. Mg(2+) serves as cofactor.

It is found in the cytoplasm. The catalysed reaction is apo-[ACP] + CoA = holo-[ACP] + adenosine 3',5'-bisphosphate + H(+). In terms of biological role, transfers the 4'-phosphopantetheine moiety from coenzyme A to a Ser of acyl-carrier-protein. The polypeptide is Holo-[acyl-carrier-protein] synthase (Mycobacterium tuberculosis (strain CDC 1551 / Oshkosh)).